Here is a 172-residue protein sequence, read N- to C-terminus: Small ribosomal subunit protein uS5 (172 aa).

The region spanning 17–80 (LREKMISVNR…DEARRKMVKV (64 aa)) is the S5 DRBM domain.

The protein belongs to the universal ribosomal protein uS5 family. As to quaternary structure, part of the 30S ribosomal subunit. Contacts proteins S4 and S8.

Its function is as follows. With S4 and S12 plays an important role in translational accuracy. Functionally, located at the back of the 30S subunit body where it stabilizes the conformation of the head with respect to the body. The sequence is that of Small ribosomal subunit protein uS5 from Cupriavidus metallidurans (strain ATCC 43123 / DSM 2839 / NBRC 102507 / CH34) (Ralstonia metallidurans).